We begin with the raw amino-acid sequence, 693 residues long: Putative tyrosinase-like protein tyr-3 (693 aa).

Positions 1-18 (MIRYIILLVYFLIFEVNS) are cleaved as a signal peptide. Residues His-142, His-152, His-161, His-281, His-285, and His-308 each coordinate Cu cation. 4 ShKT domains span residues 472–506 (CFNE…CRQC), 516–550 (CSDR…CQKC), 591–625 (CYNE…CGVC), and 634–667 (CADY…CNTC). Disulfide bonds link Cys-472–Cys-506, Cys-479–Cys-499, Cys-488–Cys-503, Cys-516–Cys-550, Cys-523–Cys-543, Cys-532–Cys-547, Cys-591–Cys-625, Cys-598–Cys-618, Cys-607–Cys-622, Cys-634–Cys-667, Cys-641–Cys-660, and Cys-650–Cys-664.

This sequence belongs to the tyrosinase family. Requires Cu(2+) as cofactor.

The protein is Putative tyrosinase-like protein tyr-3 (tyr-3) of Caenorhabditis elegans.